A 469-amino-acid polypeptide reads, in one-letter code: tRNA-2-methylthio-N(6)-dimethylallyladenosine synthase (469 aa).

An MTTase N-terminal domain is found at 22–142 (RKVFIKTYGC…LPEALRRAKE (121 aa)). Residues C31, C67, C105, C183, C187, and C190 each contribute to the [4Fe-4S] cluster site. A Radical SAM core domain is found at 169–401 (RARGVTAFLT…QALLLKQQQE (233 aa)). The TRAM domain occupies 404 to 466 (ESCIGKEIDL…NNSLFAERAE (63 aa)).

The protein belongs to the methylthiotransferase family. MiaB subfamily. Monomer. [4Fe-4S] cluster is required as a cofactor.

Its subcellular location is the cytoplasm. The enzyme catalyses N(6)-dimethylallyladenosine(37) in tRNA + (sulfur carrier)-SH + AH2 + 2 S-adenosyl-L-methionine = 2-methylsulfanyl-N(6)-dimethylallyladenosine(37) in tRNA + (sulfur carrier)-H + 5'-deoxyadenosine + L-methionine + A + S-adenosyl-L-homocysteine + 2 H(+). Its function is as follows. Catalyzes the methylthiolation of N6-(dimethylallyl)adenosine (i(6)A), leading to the formation of 2-methylthio-N6-(dimethylallyl)adenosine (ms(2)i(6)A) at position 37 in tRNAs that read codons beginning with uridine. The polypeptide is tRNA-2-methylthio-N(6)-dimethylallyladenosine synthase (Rhizobium leguminosarum bv. trifolii (strain WSM2304)).